A 27-amino-acid polypeptide reads, in one-letter code: Histone H1.3, embryonic (27 aa).

Residues 1–27 (HVVAAITALKERGGSSHQALKKYKAAN) form the H15 domain.

The protein belongs to the histone H1/H5 family.

The protein localises to the nucleus. It is found in the chromosome. Functionally, histones H1 are necessary for the condensation of nucleosome chains into higher-order structures. The protein is Histone H1.3, embryonic of Parechinus angulosus (Angulate sea urchin).